Reading from the N-terminus, the 88-residue chain is Small ribosomal subunit protein bS20 (88 aa).

The segment at 1-27 (MANSKSAKKRALQSEKRRQHNASRRSM) is disordered.

Belongs to the bacterial ribosomal protein bS20 family.

Its function is as follows. Binds directly to 16S ribosomal RNA. This is Small ribosomal subunit protein bS20 from Shewanella frigidimarina (strain NCIMB 400).